Consider the following 469-residue polypeptide: Squamosa promoter-binding-like protein 3 (469 aa).

The tract at residues 96–118 is disordered; that stretch reads SAEEHDKNMDKGKSKVDDTGTSR. Basic and acidic residues predominate over residues 97–115; that stretch reads AEEHDKNMDKGKSKVDDTG. Residues 179–256 form an SBP-type zinc finger; it reads NPHCQVEGCN…HDHNARRRKP (78 aa). Zn(2+) is bound by residues C182, C187, C204, H207, C223, C226, H230, and C242. A Bipartite nuclear localization signal motif is present at residues 239-255; it reads KRSCRRRLHDHNARRRK. The tract at residues 446 to 469 is disordered; that stretch reads NDDDEDHLQLPKPSYDNSHYDQMN. Over residues 460 to 469 the composition is skewed to polar residues; the sequence is YDNSHYDQMN.

Ubiquitous.

Its subcellular location is the nucleus. Its function is as follows. Trans-acting factor that binds specifically to the consensus nucleotide sequence 5'-TNCGTACAA-3'. May be involved in panicle development. The chain is Squamosa promoter-binding-like protein 3 (SPL3) from Oryza sativa subsp. indica (Rice).